The sequence spans 382 residues: ATP phosphoribosyltransferase regulatory subunit (382 aa).

Belongs to the class-II aminoacyl-tRNA synthetase family. HisZ subfamily. Heteromultimer composed of HisG and HisZ subunits.

It localises to the cytoplasm. It participates in amino-acid biosynthesis; L-histidine biosynthesis; L-histidine from 5-phospho-alpha-D-ribose 1-diphosphate: step 1/9. Required for the first step of histidine biosynthesis. May allow the feedback regulation of ATP phosphoribosyltransferase activity by histidine. This Burkholderia pseudomallei (strain 1106a) protein is ATP phosphoribosyltransferase regulatory subunit.